Consider the following 339-residue polypeptide: MEVVSKIDQENQAKIWKQIFGFAESLVLKCAVQLEIAETLHNNVKPMSLSELASKLPAQPVNEDRLYRILHFLVHMKLFNKDATTQKYSLAPPAKYLLKGWEKSMVPSILSVTDKDFTAPWNHLGDGLTGNCNAFEKALGKGIRVYMRENPEKDQLFNEGMACDTRLFASALVNECKSIFSDGINTLAGVGRGTGTAVKAISKAFPDIKCTIHDLPEVTSKNSKIPRDVFKSVPSADAIFMKSILHEWNDEECIQILKRCKEAIPKGGKVIIADVVIDMDSTHPYSKSRLAMDLAMMLHTGGKERTEEDWKKLIDAAGFASCKITKLSALQSVIEAYPH.

Methionine 161 contributes to the S-adenosyl-L-methionine binding site. Residue aspartate 164 coordinates substrate. S-adenosyl-L-methionine is bound by residues threonine 165, glycine 191, aspartate 214, 228–229, and lysine 242; that span reads DV. 243-247 lines the substrate pocket; that stretch reads SILHE. Residue histidine 246 is the Proton acceptor of the active site.

It belongs to the class I-like SAM-binding methyltransferase superfamily. Cation-independent O-methyltransferase family. COMT subfamily. In terms of assembly, homodimer. Forms heterodimer with SOMT2. The heterodimer SOMT2-SOMT3 possesses 3-O-acetyl-4'-O-demethylpapaveroxine 4'-O-methyltransferase activity, where SOMT2 is the catalytic subunit. As to expression, highly expressed in capsules. Expressed is stems. Expressed at low levels in roots.

It catalyses the reaction (S)-scoulerine + S-adenosyl-L-methionine = (S)-tetrahydrocolumbamine + S-adenosyl-L-homocysteine + H(+). The protein operates within alkaloid biosynthesis. Functionally, methyltransferase involved in the biosynthesis of the benzylisoquinoline alkaloid noscapine. Catalyzes the conversion of (S)-scoulerine to (S)-tetrahydrocolumbamine. The protein is Scoulerine-9-O-methyltransferase 3 of Papaver somniferum (Opium poppy).